A 140-amino-acid chain; its full sequence is Protein E6 (140 aa).

2 zinc fingers span residues 28–64 and 101–137; these read CNFC…CRYC and CHHC…CRQC.

It belongs to the papillomaviridae E6 protein family. In terms of assembly, forms homodimers. Interacts with ubiquitin-protein ligase UBE3A/E6-AP; this interaction stimulates UBE3A ubiquitin activity. Interacts with host BAK1.

Its subcellular location is the host cytoplasm. It localises to the host nucleus. Its function is as follows. Plays a major role in the induction and maintenance of cellular transformation. E6 associates with host UBE3A/E6-AP ubiquitin-protein ligase and modulates its activity. Protects host keratinocytes from apoptosis by mediating the degradation of host BAK1. May also inhibit host immune response. The protein is Protein E6 of Human papillomavirus 24.